The primary structure comprises 432 residues: Methylenetetrahydrofolate--tRNA-(uracil-5-)-methyltransferase TrmFO (432 aa).

An FAD-binding site is contributed by Gly7–Gly12.

This sequence belongs to the MnmG family. TrmFO subfamily. It depends on FAD as a cofactor.

Its subcellular location is the cytoplasm. It carries out the reaction uridine(54) in tRNA + (6R)-5,10-methylene-5,6,7,8-tetrahydrofolate + NADH + H(+) = 5-methyluridine(54) in tRNA + (6S)-5,6,7,8-tetrahydrofolate + NAD(+). The enzyme catalyses uridine(54) in tRNA + (6R)-5,10-methylene-5,6,7,8-tetrahydrofolate + NADPH + H(+) = 5-methyluridine(54) in tRNA + (6S)-5,6,7,8-tetrahydrofolate + NADP(+). Functionally, catalyzes the folate-dependent formation of 5-methyl-uridine at position 54 (M-5-U54) in all tRNAs. The polypeptide is Methylenetetrahydrofolate--tRNA-(uracil-5-)-methyltransferase TrmFO (Coprothermobacter proteolyticus (strain ATCC 35245 / DSM 5265 / OCM 4 / BT)).